The sequence spans 437 residues: MKLLVIGSGGREHALAWKLAHSRRVSEIIVAPGNAGTATETKCRNAPVKVTDLDGLLALAQREAVNITVVGPEVPLVAGIVDCFRAAGMRIFGPTAAAAQLEGSKAYAKDFLARHGIPTARYAVHTNVDAAISDVRQQGAPIVIKADGLAAGKGVIVAMTVTEAEAAIRDMLSGNAFGHAGARVVIEEYLDGEEASFISMVDGTHALPMATSQDHKRVSDGDIGPNTGGMGAYSPAPIITDEIHARVMREIVNPTVTGMIADGTPFMGFLYAGLMIDVHGAPKVIEFNVRFGDPETQPMMMRLQSDLLDLIEAALNGDLDKVQAQWDPRPSLGVVMAARPYPKAPITGEIISGLDALPANVKVFHAGTALDAAGCVVTAGGRVLCVTALGSNVSEAQRHAYAGVASLHWANAFQRSDIGWRAIMREHTVTLNVHGPV.

Residues 109-316 enclose the ATP-grasp domain; that stretch reads KDFLARHGIP…LLDLIEAALN (208 aa). 135–196 serves as a coordination point for ATP; sequence VRQQGAPIVI…EEYLDGEEAS (62 aa). Residues Glu286 and Asn288 each coordinate Mg(2+).

Belongs to the GARS family. Mg(2+) is required as a cofactor. Mn(2+) serves as cofactor.

The enzyme catalyses 5-phospho-beta-D-ribosylamine + glycine + ATP = N(1)-(5-phospho-beta-D-ribosyl)glycinamide + ADP + phosphate + H(+). Its pathway is purine metabolism; IMP biosynthesis via de novo pathway; N(1)-(5-phospho-D-ribosyl)glycinamide from 5-phospho-alpha-D-ribose 1-diphosphate: step 2/2. The chain is Phosphoribosylamine--glycine ligase from Xylella fastidiosa (strain 9a5c).